Reading from the N-terminus, the 843-residue chain is Protein P (843 aa).

Residues 1-177 form a terminal protein domain (TP) region; it reads MPLSYQHFRK…FCGSPYSWEQ (177 aa). The interval 178 to 346 is spacer; sequence DLQHGRLVFQ…YCLCHIVNLI (169 aa). The disordered stretch occupies residues 220-265; that stretch reads QSRLGPQPAQGQLAGRQQGGSGSIRARVHPSPWGTVGVEPSGSGPT. Residues 223 to 235 are compositionally biased toward low complexity; that stretch reads LGPQPAQGQLAGR. A polymerase/reverse transcriptase domain (RT) region spans residues 347–690; sequence EDWGPCTEHG…YLNLYPVARQ (344 aa). The Reverse transcriptase domain maps to 357–600; the sequence is EHLIRTPRTP…YSLNFMGYVI (244 aa). Positions 429, 551, and 552 each coordinate Mg(2+).

Belongs to the hepadnaviridae P protein family.

The enzyme catalyses DNA(n) + a 2'-deoxyribonucleoside 5'-triphosphate = DNA(n+1) + diphosphate. It catalyses the reaction Endonucleolytic cleavage to 5'-phosphomonoester.. Its activity is regulated as follows. Activated by host HSP70 and HSP40 in vitro to be able to bind the epsilon loop of the pgRNA. Because deletion of the RNase H region renders the protein partly chaperone-independent, the chaperones may be needed indirectly to relieve occlusion of the RNA-binding site by this domain. Inhibited by several reverse-transcriptase inhibitors: Lamivudine, Adefovir and Entecavir. Functionally, multifunctional enzyme that converts the viral RNA genome into dsDNA in viral cytoplasmic capsids. This enzyme displays a DNA polymerase activity that can copy either DNA or RNA templates, and a ribonuclease H (RNase H) activity that cleaves the RNA strand of RNA-DNA heteroduplexes in a partially processive 3'- to 5'-endonucleasic mode. Neo-synthesized pregenomic RNA (pgRNA) are encapsidated together with the P protein, and reverse-transcribed inside the nucleocapsid. Initiation of reverse-transcription occurs first by binding the epsilon loop on the pgRNA genome, and is initiated by protein priming, thereby the 5'-end of (-)DNA is covalently linked to P protein. Partial (+)DNA is synthesized from the (-)DNA template and generates the relaxed circular DNA (RC-DNA) genome. After budding and infection, the RC-DNA migrates in the nucleus, and is converted into a plasmid-like covalently closed circular DNA (cccDNA). The activity of P protein does not seem to be necessary for cccDNA generation, and is presumably released from (+)DNA by host nuclear DNA repair machinery. This is Protein P from Hepatitis B virus genotype B2 (isolate Vietnam/9873/1997) (HBV-B).